The primary structure comprises 164 residues: Ribosome-binding factor A (164 aa).

The protein belongs to the RbfA family. Monomer. Binds 30S ribosomal subunits, but not 50S ribosomal subunits or 70S ribosomes.

Its subcellular location is the cytoplasm. One of several proteins that assist in the late maturation steps of the functional core of the 30S ribosomal subunit. Associates with free 30S ribosomal subunits (but not with 30S subunits that are part of 70S ribosomes or polysomes). Required for efficient processing of 16S rRNA. May interact with the 5'-terminal helix region of 16S rRNA. The protein is Ribosome-binding factor A of Mycobacterium leprae (strain Br4923).